The sequence spans 96 residues: Co-chaperonin GroES (96 aa).

Belongs to the GroES chaperonin family. In terms of assembly, heptamer of 7 subunits arranged in a ring. Interacts with the chaperonin GroEL.

The protein localises to the cytoplasm. Its function is as follows. Together with the chaperonin GroEL, plays an essential role in assisting protein folding. The GroEL-GroES system forms a nano-cage that allows encapsulation of the non-native substrate proteins and provides a physical environment optimized to promote and accelerate protein folding. GroES binds to the apical surface of the GroEL ring, thereby capping the opening of the GroEL channel. The protein is Co-chaperonin GroES of Wolbachia sp. subsp. Brugia malayi (strain TRS).